The following is a 1301-amino-acid chain: Tyrosine-protein phosphatase 99A (1301 aa).

Positions 1–28 are cleaved as a signal peptide; the sequence is MPRPQHHALLRAMLKLLLFASIAEHCAT. Residues 29–394 are Extracellular-facing; sequence ALPTNSSNSP…RQSHNDYNLA (366 aa). Positions 31–63 are disordered; that stretch reads PTNSSNSPSSPSPFTVASLPPTTASSSSSPAVI. Asn-33 carries an N-linked (GlcNAc...) asparagine glycan. The span at 33–63 shows a compositional bias: low complexity; that stretch reads NSSNSPSSPSPFTVASLPPTTASSSSSPAVI. 3 Fibronectin type-III domains span residues 66 to 165, 173 to 269, and 270 to 376; these read SSFD…YAAV, KPQN…TDVG, and GPSA…LQPN. 5 N-linked (GlcNAc...) asparagine glycosylation sites follow: Asn-176, Asn-212, Asn-278, Asn-322, and Asn-336. A helical transmembrane segment spans residues 395–415; sequence VLVGIIFSCFGIILIIMAFFL. The Cytoplasmic segment spans residues 416 to 1301; it reads WSRKCFHAAY…TDAQNLDIVG (886 aa). Tyrosine-protein phosphatase domains are found at residues 476–741 and 764–1016; these read FSRE…LVEA and LEQQ…LSFL. The active-site Phosphocysteine intermediate is Cys-682. Over residues 1092–1106 the composition is skewed to polar residues; that stretch reads TALNETVSTPSTDTN. Disordered regions lie at residues 1092 to 1199 and 1257 to 1281; these read TALN…PTIP and VGDLLMNNADNSPTASPTITNNNHI. Residues 1107–1130 are compositionally biased toward low complexity; sequence PSLLPILSLLPPTVAPLSSSSSTT. The span at 1131–1142 shows a compositional bias: pro residues; it reads PPTPSTPTPQPP. Positions 1150–1161 are enriched in polar residues; that stretch reads HSPSDLSHQISS. The segment covering 1162–1188 has biased composition (low complexity); it reads TVANAASPVTPATASASAGATPTTPMT. Residues 1264 to 1273 show a composition bias toward polar residues; sequence NADNSPTASP.

This sequence belongs to the protein-tyrosine phosphatase family. Receptor class subfamily. Selectively expressed in a subset of axons and pioneer neurons (including aCC and RP2) in the embryo.

It localises to the membrane. It carries out the reaction O-phospho-L-tyrosyl-[protein] + H2O = L-tyrosyl-[protein] + phosphate. Functionally, may play a key role in signal transduction and growth control. May have a role in the establishment of the intersegmental and segmental nerves. This Drosophila melanogaster (Fruit fly) protein is Tyrosine-protein phosphatase 99A (Ptp99A).